Consider the following 266-residue polypeptide: Ribosomal RNA small subunit methyltransferase A (266 aa).

S-adenosyl-L-methionine contacts are provided by Asn13, Leu15, Gly40, Glu61, Asp86, and Asn110.

This sequence belongs to the class I-like SAM-binding methyltransferase superfamily. rRNA adenine N(6)-methyltransferase family. RsmA subfamily.

It localises to the cytoplasm. The enzyme catalyses adenosine(1518)/adenosine(1519) in 16S rRNA + 4 S-adenosyl-L-methionine = N(6)-dimethyladenosine(1518)/N(6)-dimethyladenosine(1519) in 16S rRNA + 4 S-adenosyl-L-homocysteine + 4 H(+). In terms of biological role, specifically dimethylates two adjacent adenosines (A1518 and A1519) in the loop of a conserved hairpin near the 3'-end of 16S rRNA in the 30S particle. May play a critical role in biogenesis of 30S subunits. The polypeptide is Ribosomal RNA small subunit methyltransferase A (Hydrogenovibrio crunogenus (strain DSM 25203 / XCL-2) (Thiomicrospira crunogena)).